The chain runs to 245 residues: E3 ubiquitin-protein ligase RNF138 (245 aa).

Residues 18–58 form an RING-type zinc finger; the sequence is CPVCQEVLKTPVRTAACQHVFCRKCFLTAMRESGIHCPLCR. Zn(2+)-binding residues include Cys-86, Cys-89, His-101, and Cys-105. A C2HC RNF-type zinc finger spans residues 86-105; that stretch reads CRCCSKKIKFYRMRHHYKSC. The interval 128–154 is disordered; the sequence is VRSSNRSETSASDNTETYQEDTSSSGH. Thr-142 is subject to Phosphothreonine. C2H2-type zinc fingers lie at residues 157-180 and 187-215; these read FKCP…NSNH and VTCP…NQRH. One can recognise a UIM domain in the interval 225 to 243; that stretch reads LQLDEETQYQTAVEESFQV.

As to quaternary structure, interacts with NLK. Interacts with XRCC5/Ku80. Interacts with RBBP8/CtIP. Post-translationally, auto-ubiquitinated.

It is found in the chromosome. The catalysed reaction is S-ubiquitinyl-[E2 ubiquitin-conjugating enzyme]-L-cysteine + [acceptor protein]-L-lysine = [E2 ubiquitin-conjugating enzyme]-L-cysteine + N(6)-ubiquitinyl-[acceptor protein]-L-lysine.. It functions in the pathway protein modification; protein ubiquitination. E3 ubiquitin-protein ligase involved in DNA damage response by promoting DNA resection and homologous recombination. Recruited to sites of double-strand breaks following DNA damage and specifically promotes double-strand break repair via homologous recombination. Two different, non-exclusive, mechanisms have been proposed. According to a report, regulates the choice of double-strand break repair by favoring homologous recombination over non-homologous end joining (NHEJ): acts by mediating ubiquitination of XRCC5/Ku80, leading to remove the Ku complex from DNA breaks, thereby promoting homologous recombination. According to another report, cooperates with UBE2Ds E2 ubiquitin ligases (UBE2D1, UBE2D2, UBE2D3 or UBE2D4) to promote homologous recombination by mediating ubiquitination of RBBP8/CtIP. Together with NLK, involved in the ubiquitination and degradation of TCF/LEF. Also exhibits auto-ubiquitination activity in combination with UBE2K. May act as a negative regulator in the Wnt/beta-catenin-mediated signaling pathway. This chain is E3 ubiquitin-protein ligase RNF138, found in Mus musculus (Mouse).